We begin with the raw amino-acid sequence, 678 residues long: UvrABC system protein B (678 aa).

One can recognise a Helicase ATP-binding domain in the interval E35–R422. G48 to T55 lines the ATP pocket. Positions Y101–I124 match the Beta-hairpin motif. Positions Q439–I605 constitute a Helicase C-terminal domain. A UVR domain is found at A633–R668.

Belongs to the UvrB family. Forms a heterotetramer with UvrA during the search for lesions. Interacts with UvrC in an incision complex.

The protein localises to the cytoplasm. In terms of biological role, the UvrABC repair system catalyzes the recognition and processing of DNA lesions. A damage recognition complex composed of 2 UvrA and 2 UvrB subunits scans DNA for abnormalities. Upon binding of the UvrA(2)B(2) complex to a putative damaged site, the DNA wraps around one UvrB monomer. DNA wrap is dependent on ATP binding by UvrB and probably causes local melting of the DNA helix, facilitating insertion of UvrB beta-hairpin between the DNA strands. Then UvrB probes one DNA strand for the presence of a lesion. If a lesion is found the UvrA subunits dissociate and the UvrB-DNA preincision complex is formed. This complex is subsequently bound by UvrC and the second UvrB is released. If no lesion is found, the DNA wraps around the other UvrB subunit that will check the other stand for damage. The protein is UvrABC system protein B of Bordetella pertussis (strain Tohama I / ATCC BAA-589 / NCTC 13251).